Reading from the N-terminus, the 205-residue chain is Imidazole glycerol phosphate synthase subunit HisH (205 aa).

The region spanning 3-205 is the Glutamine amidotransferase type-1 domain; it reads KIGLIDYGMG…LLRRWLSNIQ (203 aa). Cys-81 functions as the Nucleophile in the catalytic mechanism. Active-site residues include His-185 and Glu-187.

Heterodimer of HisH and HisF.

It localises to the cytoplasm. It catalyses the reaction 5-[(5-phospho-1-deoxy-D-ribulos-1-ylimino)methylamino]-1-(5-phospho-beta-D-ribosyl)imidazole-4-carboxamide + L-glutamine = D-erythro-1-(imidazol-4-yl)glycerol 3-phosphate + 5-amino-1-(5-phospho-beta-D-ribosyl)imidazole-4-carboxamide + L-glutamate + H(+). It carries out the reaction L-glutamine + H2O = L-glutamate + NH4(+). Its pathway is amino-acid biosynthesis; L-histidine biosynthesis; L-histidine from 5-phospho-alpha-D-ribose 1-diphosphate: step 5/9. In terms of biological role, IGPS catalyzes the conversion of PRFAR and glutamine to IGP, AICAR and glutamate. The HisH subunit catalyzes the hydrolysis of glutamine to glutamate and ammonia as part of the synthesis of IGP and AICAR. The resulting ammonia molecule is channeled to the active site of HisF. This chain is Imidazole glycerol phosphate synthase subunit HisH, found in Prochlorococcus marinus (strain MIT 9312).